A 232-amino-acid chain; its full sequence is 5'-methylthioadenosine/S-adenosylhomocysteine nucleosidase (232 aa).

Glu12 functions as the Proton acceptor in the catalytic mechanism. Substrate is bound by residues Gly78, Ile152, and 173–174 (ME). Asp197 serves as the catalytic Proton donor.

The protein belongs to the PNP/UDP phosphorylase family. MtnN subfamily. In terms of assembly, homodimer.

The enzyme catalyses S-adenosyl-L-homocysteine + H2O = S-(5-deoxy-D-ribos-5-yl)-L-homocysteine + adenine. It catalyses the reaction S-methyl-5'-thioadenosine + H2O = 5-(methylsulfanyl)-D-ribose + adenine. The catalysed reaction is 5'-deoxyadenosine + H2O = 5-deoxy-D-ribose + adenine. Its pathway is amino-acid biosynthesis; L-methionine biosynthesis via salvage pathway; S-methyl-5-thio-alpha-D-ribose 1-phosphate from S-methyl-5'-thioadenosine (hydrolase route): step 1/2. Catalyzes the irreversible cleavage of the glycosidic bond in both 5'-methylthioadenosine (MTA) and S-adenosylhomocysteine (SAH/AdoHcy) to adenine and the corresponding thioribose, 5'-methylthioribose and S-ribosylhomocysteine, respectively. Also cleaves 5'-deoxyadenosine, a toxic by-product of radical S-adenosylmethionine (SAM) enzymes, into 5-deoxyribose and adenine. Thus, is required for in vivo function of the radical SAM enzymes biotin synthase and lipoic acid synthase, that are inhibited by 5'-deoxyadenosine accumulation. In Cronobacter sakazakii (strain ATCC BAA-894) (Enterobacter sakazakii), this protein is 5'-methylthioadenosine/S-adenosylhomocysteine nucleosidase.